Consider the following 511-residue polypeptide: Bifunctional purine biosynthesis protein PurH (511 aa).

The region spanning 1-146 is the MGS-like domain; that stretch reads MTKRALVSVS…KNHADVTVVV (146 aa).

Belongs to the PurH family.

The catalysed reaction is (6R)-10-formyltetrahydrofolate + 5-amino-1-(5-phospho-beta-D-ribosyl)imidazole-4-carboxamide = 5-formamido-1-(5-phospho-D-ribosyl)imidazole-4-carboxamide + (6S)-5,6,7,8-tetrahydrofolate. It catalyses the reaction IMP + H2O = 5-formamido-1-(5-phospho-D-ribosyl)imidazole-4-carboxamide. It participates in purine metabolism; IMP biosynthesis via de novo pathway; 5-formamido-1-(5-phospho-D-ribosyl)imidazole-4-carboxamide from 5-amino-1-(5-phospho-D-ribosyl)imidazole-4-carboxamide (10-formyl THF route): step 1/1. Its pathway is purine metabolism; IMP biosynthesis via de novo pathway; IMP from 5-formamido-1-(5-phospho-D-ribosyl)imidazole-4-carboxamide: step 1/1. The protein is Bifunctional purine biosynthesis protein PurH of Shouchella clausii (strain KSM-K16) (Alkalihalobacillus clausii).